A 382-amino-acid polypeptide reads, in one-letter code: Protein RecA (382 aa).

Residues 1–20 (MPADVKAAQSSAGDSRPGER) are disordered. 79–86 (GPESSGKT) contacts ATP. A compositionally biased stretch (low complexity) spans 360 to 369 (SAAAKPSAKT). Residues 360 to 382 (SAAAKPSAKTADTDKKLVADGAA) are disordered. The span at 370–382 (ADTDKKLVADGAA) shows a compositional bias: basic and acidic residues.

It belongs to the RecA family.

The protein localises to the cytoplasm. In terms of biological role, can catalyze the hydrolysis of ATP in the presence of single-stranded DNA, the ATP-dependent uptake of single-stranded DNA by duplex DNA, and the ATP-dependent hybridization of homologous single-stranded DNAs. It interacts with LexA causing its activation and leading to its autocatalytic cleavage. This chain is Protein RecA, found in Synechococcus sp. (strain CC9311).